The chain runs to 638 residues: Glucans biosynthesis glucosyltransferase H (638 aa).

A run of 6 helical transmembrane segments spans residues 60 to 82 (FYLIGGTMAMSLIATWVMLAVMW), 97 to 119 (FMFLFAWVTMSFASALAGFFCVV), 415 to 437 (IGHYFTAPMWGLLMLVGIAIPLV), 464 to 486 (LWIFTFTMFVLLAPKLLAYFALL), 499 to 521 (LRVLLSILLESILAALMAPVVMY), and 578 to 600 (LAMWMSPVVLGMAFSVPVVALTS).

It belongs to the glycosyltransferase 2 family. OpgH subfamily.

It localises to the cell inner membrane. It participates in glycan metabolism; osmoregulated periplasmic glucan (OPG) biosynthesis. Its function is as follows. Involved in the biosynthesis of osmoregulated periplasmic glucans (OPGs). The chain is Glucans biosynthesis glucosyltransferase H from Xylella fastidiosa (strain 9a5c).